We begin with the raw amino-acid sequence, 649 residues long: Cysteine-rich receptor-like protein kinase 2 (649 aa).

An N-terminal signal peptide occupies residues 1–29; that stretch reads MKKEPVHILPLYLPCLLMFLLSSLRQITG. Over 30–258 the chain is Extracellular; that stretch reads DARARAVKVT…IPRNGRSRGS (229 aa). Gnk2-homologous domains are found at residues 33-134 and 139-245; these read ARAV…NYSF and KGPE…DQDF. N47, N131, N149, N154, and N214 each carry an N-linked (GlcNAc...) asparagine glycan. A helical membrane pass occupies residues 259–279; sequence VVVIVVSVLSSVVVFMIGVAV. Topologically, residues 280-649 are cytoplasmic; that stretch reads SVYICKRRTI…TVSQSSFYGR (370 aa). Positions 325 to 608 constitute a Protein kinase domain; it reads FDNANKLGQG…HMLKNKEEVL (284 aa). ATP contacts are provided by residues 331–339 and K353; that span reads LGQGGFGTV. Y398 is subject to Phosphotyrosine. Catalysis depends on D450, which acts as the Proton acceptor. A phosphoserine mark is found at S454 and S483. Phosphothreonine is present on residues T484 and T489. Y497 is modified (phosphotyrosine).

This sequence belongs to the protein kinase superfamily. Ser/Thr protein kinase family. CRK subfamily.

The protein localises to the membrane. The catalysed reaction is L-seryl-[protein] + ATP = O-phospho-L-seryl-[protein] + ADP + H(+). The enzyme catalyses L-threonyl-[protein] + ATP = O-phospho-L-threonyl-[protein] + ADP + H(+). The sequence is that of Cysteine-rich receptor-like protein kinase 2 (CRK2) from Arabidopsis thaliana (Mouse-ear cress).